A 135-amino-acid chain; its full sequence is MLQPNNTKFRKFQKSRVKGVQSNTDQLRYGKFGIKTVSAARIPARTIEAVRRVITRKFKRLGVIWIRVFPDIAVSGKPAEVRMGKGKGAPQYWVCKVKRGAILFEFDGISPQLAKQAARLADSKLPIKTRFVMYS.

Belongs to the universal ribosomal protein uL16 family.

Its subcellular location is the mitochondrion. The sequence is that of Large ribosomal subunit protein uL16m (RPL16) from Prototheca wickerhamii.